Consider the following 95-residue polypeptide: Putative pterin-4-alpha-carbinolamine dehydratase (95 aa).

It belongs to the pterin-4-alpha-carbinolamine dehydratase family.

The enzyme catalyses (4aS,6R)-4a-hydroxy-L-erythro-5,6,7,8-tetrahydrobiopterin = (6R)-L-erythro-6,7-dihydrobiopterin + H2O. This is Putative pterin-4-alpha-carbinolamine dehydratase from Thermosynechococcus vestitus (strain NIES-2133 / IAM M-273 / BP-1).